We begin with the raw amino-acid sequence, 356 residues long: tRNA N6-adenosine threonylcarbamoyltransferase (356 aa).

Fe cation is bound by residues His115 and His119. Substrate-binding positions include 138-142, Asp171, Gly184, and Asn283; that span reads LVSGG. Residue Asp311 participates in Fe cation binding.

Belongs to the KAE1 / TsaD family. Requires Fe(2+) as cofactor.

Its subcellular location is the cytoplasm. The catalysed reaction is L-threonylcarbamoyladenylate + adenosine(37) in tRNA = N(6)-L-threonylcarbamoyladenosine(37) in tRNA + AMP + H(+). Required for the formation of a threonylcarbamoyl group on adenosine at position 37 (t(6)A37) in tRNAs that read codons beginning with adenine. Is involved in the transfer of the threonylcarbamoyl moiety of threonylcarbamoyl-AMP (TC-AMP) to the N6 group of A37, together with TsaE and TsaB. TsaD likely plays a direct catalytic role in this reaction. The sequence is that of tRNA N6-adenosine threonylcarbamoyltransferase from Prochlorococcus marinus (strain MIT 9515).